The primary structure comprises 391 residues: Formate-dependent phosphoribosylglycinamide formyltransferase (391 aa).

N(1)-(5-phospho-beta-D-ribosyl)glycinamide contacts are provided by residues 20–21 (EL) and glutamate 80. ATP contacts are provided by residues arginine 112, lysine 153, 158–163 (SSGKGQ), 193–196 (EGFV), and glutamate 201. In terms of domain architecture, ATP-grasp spans 117-306 (RLAAEELGLP…EFALHVRAFT (190 aa)). Mg(2+) contacts are provided by glutamate 265 and glutamate 277. N(1)-(5-phospho-beta-D-ribosyl)glycinamide-binding positions include aspartate 284, lysine 354, and 361 to 362 (RR).

This sequence belongs to the PurK/PurT family. In terms of assembly, homodimer.

The enzyme catalyses N(1)-(5-phospho-beta-D-ribosyl)glycinamide + formate + ATP = N(2)-formyl-N(1)-(5-phospho-beta-D-ribosyl)glycinamide + ADP + phosphate + H(+). The protein operates within purine metabolism; IMP biosynthesis via de novo pathway; N(2)-formyl-N(1)-(5-phospho-D-ribosyl)glycinamide from N(1)-(5-phospho-D-ribosyl)glycinamide (formate route): step 1/1. In terms of biological role, involved in the de novo purine biosynthesis. Catalyzes the transfer of formate to 5-phospho-ribosyl-glycinamide (GAR), producing 5-phospho-ribosyl-N-formylglycinamide (FGAR). Formate is provided by PurU via hydrolysis of 10-formyl-tetrahydrofolate. The protein is Formate-dependent phosphoribosylglycinamide formyltransferase of Vibrio cholerae serotype O1 (strain ATCC 39315 / El Tor Inaba N16961).